Reading from the N-terminus, the 187-residue chain is Cerebral dopamine neurotrophic factor (187 aa).

Residues 1 to 24 form the signal peptide; it reads MRCISPTALVTFCAGFCISNPVLA. Disulfide bonds link cysteine 37–cysteine 124, cysteine 40–cysteine 113, and cysteine 71–cysteine 82.

It belongs to the ARMET family. As to expression, expressed at high levels in the heart, skeletal muscle, testis and brain (at protein level). In the brain, detected in the cerebral cortex neurons through layers II to VI. In the hippocampus, detected in the CA1 to CA3 pyramidal regions and in the granule and polymorph layers of dentate gyrus. Weak expression in the striatum. In substantia nigra, detected in solitary cells that did not express tyrosine hydroxylase, a marker for dopaminergic neurons. Relatively high expression in the Purkinje cells of the cerebellum and in regions of the brain stem, including the locus coeruleus.

It is found in the secreted. Functionally, trophic factor for dopamine neurons. Prevents the 6-hydroxydopamine (6-OHDA)-induced degeneration of dopaminergic neurons. When administered after 6-OHDA-lesioning, restores the dopaminergic function and prevents the degeneration of dopaminergic neurons in substantia nigra. The sequence is that of Cerebral dopamine neurotrophic factor (Cdnf) from Mus musculus (Mouse).